The sequence spans 176 residues: ATP-dependent protease subunit HslV (176 aa).

The active site involves Thr-6. Positions 161, 164, and 167 each coordinate Na(+).

Belongs to the peptidase T1B family. HslV subfamily. As to quaternary structure, a double ring-shaped homohexamer of HslV is capped on each side by a ring-shaped HslU homohexamer. The assembly of the HslU/HslV complex is dependent on binding of ATP.

The protein resides in the cytoplasm. The catalysed reaction is ATP-dependent cleavage of peptide bonds with broad specificity.. Allosterically activated by HslU binding. Functionally, protease subunit of a proteasome-like degradation complex believed to be a general protein degrading machinery. In Thermosipho africanus (strain TCF52B), this protein is ATP-dependent protease subunit HslV.